The sequence spans 593 residues: Tectonic-1 (593 aa).

Positions methionine 1–threonine 22 are cleaved as a signal peptide. Positions lysine 37–proline 72 are disordered. Asparagine 41 carries an N-linked (GlcNAc...) asparagine glycan. The segment covering serine 42–threonine 58 has biased composition (polar residues). A glycan (N-linked (GlcNAc...) asparagine) is linked at asparagine 303. Arginine 486 carries the omega-N-methylarginine modification. N-linked (GlcNAc...) asparagine glycosylation occurs at asparagine 536.

Belongs to the tectonic family. Part of the tectonic-like complex (also named B9 complex).

It is found in the cytoplasm. It localises to the cytoskeleton. The protein localises to the cilium basal body. Its subcellular location is the secreted. Its function is as follows. Component of the tectonic-like complex, a complex localized at the transition zone of primary cilia and acting as a barrier that prevents diffusion of transmembrane proteins between the cilia and plasma membranes. Regulator of Hedgehog (Hh), required for both activation and inhibition of the Hh pathway in the patterning of the neural tube. During neural tube development, it is required for formation of the most ventral cell types and for full Hh pathway activation. Functions in Hh signal transduction to fully activate the pathway in the presence of high Hh levels and to repress the pathway in the absence of Hh signals. Modulates Hh signal transduction downstream of SMO and RAB23. The protein is Tectonic-1 (Tctn1) of Mus musculus (Mouse).